Reading from the N-terminus, the 264-residue chain is Matrilysin (264 aa).

Residues 1-17 form the signal peptide; it reads MQLTLFCFVCLLPGHLA. A propeptide spans 18–94 (activation peptide); sequence LPLSQEAGDV…PRCGVPDVAE (77 aa). The short motif at 85–92 is the Cysteine switch element; sequence PRCGVPDV. Cys87 lines the Zn(2+) pocket. Asp153 is a binding site for Ca(2+). Zn(2+)-binding residues include His163 and Asp165. 4 residues coordinate Ca(2+): Asp170, Gly171, Gly173, and Thr175. Position 178 (His178) interacts with Zn(2+). Residues Gly185, Gly187, and Asp189 each coordinate Ca(2+). A Zn(2+)-binding site is contributed by His191. Positions 193 and 196 each coordinate Ca(2+). Residue His214 coordinates Zn(2+). Residue Glu215 is part of the active site. Zn(2+) is bound by residues His218 and His224.

This sequence belongs to the peptidase M10A family. Ca(2+) is required as a cofactor. It depends on Zn(2+) as a cofactor. In terms of tissue distribution, expressed in the intestinal epithelium (at protein level).

It localises to the secreted. The protein localises to the extracellular space. The protein resides in the extracellular matrix. The catalysed reaction is Cleavage of 14-Ala-|-Leu-15 and 16-Tyr-|-Leu-17 in B chain of insulin. No action on collagen types I, II, IV, V. Cleaves gelatin chain alpha2(I) &gt; alpha1(I).. In terms of biological role, degrades casein, gelatins of types I, III, IV, and V, and fibronectin. Activates procollagenase. May play a role in tissue reorganization. The chain is Matrilysin (Mmp7) from Mus musculus (Mouse).